A 729-amino-acid polypeptide reads, in one-letter code: Rho GTPase-activating protein 28 (729 aa).

Residues 1-78 (MEVEDSGGVV…ASVDSSASME (78 aa)) are disordered. A compositionally biased stretch (basic residues) spans 37–49 (LSRKSIPRCRRIN). A compositionally biased stretch (low complexity) spans 63 to 76 (SRSNSQASVDSSAS). Ser70 carries the post-translational modification Phosphoserine. Thr164 carries the post-translational modification Phosphothreonine. The disordered stretch occupies residues 180–234 (FGVSESPPSDSCEHATQLDGTKEEKDLPGVTKTSRPLPDDASLSSTTLSNGAQDE). Residues 221 to 231 (SLSSTTLSNGA) are compositionally biased toward polar residues. One can recognise a Rho-GAP domain in the interval 384 to 581 (VPLTVLLDND…LMLKYQKILW (198 aa)).

Its function is as follows. GTPase activator for the Rho-type GTPases by converting them to an inactive GDP-bound state. In Mus musculus (Mouse), this protein is Rho GTPase-activating protein 28 (Arhgap28).